Consider the following 203-residue polypeptide: Outer-membrane lipoprotein carrier protein (203 aa).

The signal sequence occupies residues Met1–Ala21.

This sequence belongs to the LolA family. In terms of assembly, monomer.

It localises to the periplasm. Participates in the translocation of lipoproteins from the inner membrane to the outer membrane. Only forms a complex with a lipoprotein if the residue after the N-terminal Cys is not an aspartate (The Asp acts as a targeting signal to indicate that the lipoprotein should stay in the inner membrane). The polypeptide is Outer-membrane lipoprotein carrier protein (Photorhabdus laumondii subsp. laumondii (strain DSM 15139 / CIP 105565 / TT01) (Photorhabdus luminescens subsp. laumondii)).